Consider the following 284-residue polypeptide: Diaminopimelate epimerase (284 aa).

Substrate-binding residues include asparagine 20, glutamine 53, and asparagine 73. The Proton donor role is filled by cysteine 82. Substrate contacts are provided by residues 83 to 84 (GN), asparagine 167, asparagine 200, and 218 to 219 (ER). Cysteine 227 serves as the catalytic Proton acceptor. 228 to 229 (GS) serves as a coordination point for substrate.

Belongs to the diaminopimelate epimerase family. As to quaternary structure, homodimer.

The protein resides in the cytoplasm. The enzyme catalyses (2S,6S)-2,6-diaminopimelate = meso-2,6-diaminopimelate. The protein operates within amino-acid biosynthesis; L-lysine biosynthesis via DAP pathway; DL-2,6-diaminopimelate from LL-2,6-diaminopimelate: step 1/1. Its function is as follows. Catalyzes the stereoinversion of LL-2,6-diaminopimelate (L,L-DAP) to meso-diaminopimelate (meso-DAP), a precursor of L-lysine and an essential component of the bacterial peptidoglycan. This Xanthomonas campestris pv. campestris (strain ATCC 33913 / DSM 3586 / NCPPB 528 / LMG 568 / P 25) protein is Diaminopimelate epimerase.